A 301-amino-acid chain; its full sequence is Quinolinate synthase (301 aa).

Iminosuccinate-binding residues include His21 and Ser38. Cys83 lines the [4Fe-4S] cluster pocket. Residues 109-111 (YIN) and Ser126 each bind iminosuccinate. Cys169 contacts [4Fe-4S] cluster. Residues 195-197 (HPE) and Thr212 contribute to the iminosuccinate site. Cys257 contributes to the [4Fe-4S] cluster binding site.

Belongs to the quinolinate synthase family. Type 2 subfamily. [4Fe-4S] cluster serves as cofactor.

Its subcellular location is the cytoplasm. It carries out the reaction iminosuccinate + dihydroxyacetone phosphate = quinolinate + phosphate + 2 H2O + H(+). Its pathway is cofactor biosynthesis; NAD(+) biosynthesis; quinolinate from iminoaspartate: step 1/1. Catalyzes the condensation of iminoaspartate with dihydroxyacetone phosphate to form quinolinate. This Clostridium perfringens (strain SM101 / Type A) protein is Quinolinate synthase.